Consider the following 427-residue polypeptide: Serine--tRNA ligase (427 aa).

Residue 233–235 (TGE) coordinates L-serine. Position 264-266 (264-266 (RSE)) interacts with ATP. Glutamate 287 serves as a coordination point for L-serine. 351-354 (EVSS) is an ATP binding site. Serine 387 provides a ligand contact to L-serine.

The protein belongs to the class-II aminoacyl-tRNA synthetase family. Type-1 seryl-tRNA synthetase subfamily. As to quaternary structure, homodimer. The tRNA molecule binds across the dimer.

It is found in the cytoplasm. It carries out the reaction tRNA(Ser) + L-serine + ATP = L-seryl-tRNA(Ser) + AMP + diphosphate + H(+). The enzyme catalyses tRNA(Sec) + L-serine + ATP = L-seryl-tRNA(Sec) + AMP + diphosphate + H(+). It functions in the pathway aminoacyl-tRNA biosynthesis; selenocysteinyl-tRNA(Sec) biosynthesis; L-seryl-tRNA(Sec) from L-serine and tRNA(Sec): step 1/1. Catalyzes the attachment of serine to tRNA(Ser). Is also able to aminoacylate tRNA(Sec) with serine, to form the misacylated tRNA L-seryl-tRNA(Sec), which will be further converted into selenocysteinyl-tRNA(Sec). The protein is Serine--tRNA ligase of Buchnera aphidicola subsp. Acyrthosiphon pisum (strain 5A).